Here is a 271-residue protein sequence, read N- to C-terminus: Probable esterase D14L (271 aa).

The active-site Nucleophile is S96. Catalysis depends on residues D218 and H247.

The protein belongs to the AB hydrolase superfamily. In terms of assembly, component of an intracellular receptor complex involved in the detection of the smoke compound karrikin. As to expression, expressed constitutively in all organs (e.g. roots, stems, leaves, panicles and embryos).

It localises to the nucleus. It is found in the cytoplasm. Functionally, may be involved in strigolactone signaling pathway. Essential for plant responses to karrikins, a class of butenolide compounds, structurally similar to strigolactones, released from burning vegetation that stimulate seed germination and enhance seedling photomorphogenesis. Mediates a specific perception of karrikin. Required for the establishment of symbiosis with the arbuscular mycorrhizal fungi (AMF) Rhizophagus irregularis and Gigaspora rosea. Karrikin binding induces a conformational change. The sequence is that of Probable esterase D14L (D14L) from Oryza sativa subsp. japonica (Rice).